A 265-amino-acid polypeptide reads, in one-letter code: Serine protease 1 (265 aa).

A signal peptide spans 1–21 (MKLFVFLALAVAAATAVPAPA). Residues 22-35 (QKLTPTPIKDIQGR) constitute a propeptide that is removed on maturation. Residues 36 to 262 (ITNGYPAYEG…YLDWIRDNTG (227 aa)) enclose the Peptidase S1 domain. Cys-63 and Cys-79 are oxidised to a cystine. Residues His-78 and Asp-123 each act as charge relay system in the active site. Cystine bridges form between Cys-189–Cys-201 and Cys-211–Cys-239. The active-site Charge relay system is Ser-215.

The protein belongs to the peptidase S1 family. As to expression, abundantly expressed in the larval gut.

Its function is as follows. Major function may be to aid in digestion. In Drosophila melanogaster (Fruit fly), this protein is Serine protease 1.